A 60-amino-acid chain; its full sequence is Small integral membrane protein 3 (60 aa).

The helical transmembrane segment at 20 to 40 threads the bilayer; it reads IWVIVLIILATIVIMTSLLLC.

It localises to the membrane. The polypeptide is Small integral membrane protein 3 (SMIM3) (Homo sapiens (Human)).